Consider the following 701-residue polypeptide: Polyribonucleotide nucleotidyltransferase (701 aa).

2 residues coordinate Mg(2+): Asp-485 and Asp-491. The 60-residue stretch at 552–611 (PKIFKTTVDPEKIRDIIGPGGKMINKIIAKTNVKIDIEPDGRIFVAAPDDISGNRAISMI) folds into the KH domain. An S1 motif domain is found at 621–689 (GQFFLGKVTR…RLGRIALSRK (69 aa)).

The protein belongs to the polyribonucleotide nucleotidyltransferase family. Mg(2+) serves as cofactor.

It is found in the cytoplasm. The catalysed reaction is RNA(n+1) + phosphate = RNA(n) + a ribonucleoside 5'-diphosphate. Its function is as follows. Involved in mRNA degradation. Catalyzes the phosphorolysis of single-stranded polyribonucleotides processively in the 3'- to 5'-direction. This chain is Polyribonucleotide nucleotidyltransferase, found in Caldicellulosiruptor saccharolyticus (strain ATCC 43494 / DSM 8903 / Tp8T 6331).